The sequence spans 269 residues: Mitochondrial S-adenosylmethionine carrier protein (269 aa).

Solcar repeat units follow at residues 4-77 (REFC…AKQL), 85-167 (LSPI…LKDL), and 176-264 (VDSW…VRTL). A run of 6 helical transmembrane segments spans residues 5–25 (EFCA…LILF), 49–69 (IYAG…AFFV), 84–104 (YLSP…ACLI), 141–161 (RGYK…FPLW), 181–201 (SAVC…PLDV), and 237–257 (FAGV…FLGA).

This sequence belongs to the mitochondrial carrier (TC 2.A.29) family.

The protein resides in the mitochondrion inner membrane. It carries out the reaction S-adenosyl-L-homocysteine(out) + S-adenosyl-L-methionine(in) = S-adenosyl-L-homocysteine(in) + S-adenosyl-L-methionine(out). Mitochondrial S-adenosyl-L-methionine/S-adenosyl-L-homocysteine antiporter. Mediates the exchange of cytosolic S-adenosyl-L-methionine, the predominant methyl-group donor for macromolecule methylation processes, for mitochondrial S-adenosylhomocysteine(SAH), a by-product of methylation reactions. The polypeptide is Mitochondrial S-adenosylmethionine carrier protein (slc25a26) (Xenopus tropicalis (Western clawed frog)).